The chain runs to 444 residues: F-box protein At1g53790 (444 aa).

The region spanning 76–125 is the F-box domain; that stretch reads VSCFRYIPIDLLMDIFSRVPAKSIARFRCVSKLWESILCRPDFKELFMTM.

In Arabidopsis thaliana (Mouse-ear cress), this protein is F-box protein At1g53790.